The primary structure comprises 362 residues: Melatonin receptor type 1B (362 aa).

Topologically, residues 1 to 42 are extracellular; the sequence is MSENGSFANCCEAGGWAVRPGWSGAGSARPSRTPRPPWVAPA. N4 carries an N-linked (GlcNAc...) asparagine glycan. Residues 43 to 63 form a helical membrane-spanning segment; that stretch reads LSAVLIVTTAVDVVGNLLVIL. The Cytoplasmic segment spans residues 64-76; it reads SVLRNRKLRNAGN. A helical transmembrane segment spans residues 77–97; that stretch reads LFLVSLALADLVVAFYPYPLI. The Extracellular portion of the chain corresponds to 98–115; sequence LVAIFYDGWALGEEHCKA. A disulfide bridge links C113 with C190. Residues 116-136 traverse the membrane as a helical segment; that stretch reads SAFVMGLSVIGSVFNITAIAI. Residues 137-155 lie on the Cytoplasmic side of the membrane; the sequence is NRYCYICHSMAYHRIYRRW. The helical transmembrane segment at 156-176 threads the bilayer; it reads HTPLHICLIWLLTVVALLPNF. The melatonin site is built by N175 and Q194. At 177 to 200 the chain is on the extracellular side; it reads FVGSLEYDPRIYSCTFIQTASTQY. A helical membrane pass occupies residues 201-221; the sequence is TAAVVVIHFLLPIAVVSFCYL. Topologically, residues 222 to 253 are cytoplasmic; it reads RIWVLVLQARRKAKPESRLCLKPSDLRSFLTM. The chain crosses the membrane as a helical span at residues 254 to 274; the sequence is FVVFVIFAICWAPLNCIGLAV. Topologically, residues 275 to 287 are extracellular; the sequence is AINPQEMAPQIPE. The helical transmembrane segment at 288-308 threads the bilayer; sequence GLFVTSYLLAYFNSCLNAIVY. The Cytoplasmic segment spans residues 309 to 362; the sequence is GLLNQNFRREYKRILLALWNPRHCIQDASKGSHAEGLQSPAPPIIGVQHQADAL.

It belongs to the G-protein coupled receptor 1 family. Interacts with GPR61, GPR62 and GPR135. In terms of tissue distribution, expressed in retina and less in brain and hippocampus.

It is found in the cell membrane. Functionally, high affinity receptor for melatonin. Likely to mediate the reproductive and circadian actions of melatonin. The activity of this receptor is mediated by pertussis toxin sensitive G proteins that inhibit adenylate cyclase activity. The sequence is that of Melatonin receptor type 1B (MTNR1B) from Homo sapiens (Human).